A 620-amino-acid chain; its full sequence is Toxin coregulated pilus biosynthesis protein I (620 aa).

In terms of domain architecture, Methyl-accepting transducer spans Thr-344–Arg-580.

It belongs to the methyl-accepting chemotaxis (MCP) protein family.

It is found in the cell inner membrane. May function as an environmental regulator of TCP biogenesis. Negatively regulates the synthesis of the major pilin subunit of TCP (TcpA). The chain is Toxin coregulated pilus biosynthesis protein I (tcpI) from Vibrio cholerae serotype O1 (strain ATCC 39315 / El Tor Inaba N16961).